Here is a 156-residue protein sequence, read N- to C-terminus: Large ribosomal subunit protein eL29 (156 aa).

Residues 1–26 (MAKSKNHTTHNQSRKWHRNGIKKPRS) are compositionally biased toward basic residues. 2 disordered regions span residues 1–35 (MAKS…LKGV) and 116–156 (RRLC…VKAP). The residue at position 5 (lysine 5) is an N6-methyllysine. Serine 31 carries the phosphoserine modification. The residue at position 33 (lysine 33) is an N6-acetyllysine. Tandem repeats lie at residues 129–136 (AEAKAPAK) and 137–144 (AQAKAPAQ). A 2 X 8 AA tandem repeats of A-X-A-K-A-P-A-[KQ] region spans residues 129–144 (AEAKAPAKAQAKAPAQ). The span at 134-156 (PAKAQAKAPAQAPKGAQAPVKAP) shows a compositional bias: low complexity.

The protein belongs to the eukaryotic ribosomal protein eL29 family. Component of the large ribosomal subunit.

It localises to the cytoplasm. Component of the large ribosomal subunit. The ribosome is a large ribonucleoprotein complex responsible for the synthesis of proteins in the cell. This Rattus norvegicus (Rat) protein is Large ribosomal subunit protein eL29 (Rpl29).